The primary structure comprises 575 residues: Sulfite reductase [NADPH] hemoprotein beta-component (575 aa).

[4Fe-4S] cluster is bound by residues cysteine 438, cysteine 444, cysteine 484, and cysteine 488. A siroheme-binding site is contributed by cysteine 488.

It belongs to the nitrite and sulfite reductase 4Fe-4S domain family. Alpha(8)-beta(8). The alpha component is a flavoprotein, the beta component is a hemoprotein. Siroheme is required as a cofactor. The cofactor is [4Fe-4S] cluster.

It carries out the reaction hydrogen sulfide + 3 NADP(+) + 3 H2O = sulfite + 3 NADPH + 4 H(+). It functions in the pathway sulfur metabolism; hydrogen sulfide biosynthesis; hydrogen sulfide from sulfite (NADPH route): step 1/1. In terms of biological role, component of the sulfite reductase complex that catalyzes the 6-electron reduction of sulfite to sulfide. This is one of several activities required for the biosynthesis of L-cysteine from sulfate. The protein is Sulfite reductase [NADPH] hemoprotein beta-component of Vibrio atlanticus (strain LGP32) (Vibrio splendidus (strain Mel32)).